The following is a 742-amino-acid chain: Probable LRR receptor-like serine/threonine-protein kinase At2g02780 (742 aa).

The signal sequence occupies residues M1–S25. Residues E26–L354 lie on the Extracellular side of the membrane. LRR repeat units lie at residues H74–K96, L104–K128, S130–L154, N156–G177, L178–T204, S206–L223, N224–I247, S249–S271, and K273–S294. Residue N85 is glycosylated (N-linked (GlcNAc...) asparagine). N137 carries an N-linked (GlcNAc...) asparagine glycan. A glycan (N-linked (GlcNAc...) asparagine) is linked at N209. An N-linked (GlcNAc...) asparagine glycan is attached at N266. Residue N299 is glycosylated (N-linked (GlcNAc...) asparagine). The helical transmembrane segment at V355 to I375 threads the bilayer. The Cytoplasmic portion of the chain corresponds to A376 to E742. The interval D386–P424 is disordered. A compositionally biased stretch (polar residues) spans V406–L417. The Protein kinase domain occupies T426–I720.

This sequence belongs to the protein kinase superfamily. Ser/Thr protein kinase family.

The protein resides in the membrane. It catalyses the reaction L-seryl-[protein] + ATP = O-phospho-L-seryl-[protein] + ADP + H(+). The enzyme catalyses L-threonyl-[protein] + ATP = O-phospho-L-threonyl-[protein] + ADP + H(+). The polypeptide is Probable LRR receptor-like serine/threonine-protein kinase At2g02780 (Arabidopsis thaliana (Mouse-ear cress)).